The primary structure comprises 502 residues: MPVKGLKVEAASIDPGHDAVILNPRDAEHLGVVAGLRASVVCRGRGVGAVVIVDPRVPERVAQLTKGLVERLGDCDTVDVHPIDVPPSFDAFKKRLSGARLSAAEYKMLIADIVAGYYDDAQIASFLVSQLYSKLADEELEHLIRAMVETGEVVKFGEPVYDVHSIGGVPGNSKVALLVVPIVASRGLLIPKTSSRAITSPAGTADTMEVLAKVAFKPQELHDMALRARGLIVWGGALNLAPADDIFVRVERRIGVDPPTQMVASILAKKLAMSVSRLVIDLPTGRGAKVQDESEAELLASMFLAQAGRLNIAMRVAITFGGEPIGFSVGPALEAREALQTLMKGDGASSLVEKACSLAGLVFELGGVVPRGRGYSLACEILRSGAAYRKFREIIEVQEGDPDIKPEDIKLAPKQFTLEAPRDGIVTMIDNRAISLAARAAGAPEDKGAGIQLHVKTGYRVRKGDPLLTIYASSDTRLHEAVRLLDEYNAVLIEGVVVKVLP.

AMP contacts are provided by residues Gly-168, 195–200 (SRAITS), and Thr-204. Asp-257 acts as the Proton donor in catalysis. Ser-265 and Lys-289 together coordinate AMP.

Belongs to the thymidine/pyrimidine-nucleoside phosphorylase family. Type 2 subfamily.

It carries out the reaction AMP + phosphate = alpha-D-ribose 1,5-bisphosphate + adenine. The enzyme catalyses CMP + phosphate = cytosine + alpha-D-ribose 1,5-bisphosphate. It catalyses the reaction UMP + phosphate = alpha-D-ribose 1,5-bisphosphate + uracil. Its function is as follows. Catalyzes the conversion of AMP and phosphate to adenine and ribose 1,5-bisphosphate (R15P). Exhibits phosphorylase activity toward CMP and UMP in addition to AMP. Functions in an archaeal AMP degradation pathway, together with R15P isomerase and RubisCO. The sequence is that of AMP phosphorylase from Hyperthermus butylicus (strain DSM 5456 / JCM 9403 / PLM1-5).